The chain runs to 156 residues: SsrA-binding protein (156 aa).

A compositionally biased stretch (basic and acidic residues) spans 135–150; sequence KRDTIKDREWQRDRSR. The interval 135 to 156 is disordered; sequence KRDTIKDREWQRDRSRIMKKNT.

It belongs to the SmpB family.

Its subcellular location is the cytoplasm. Functionally, required for rescue of stalled ribosomes mediated by trans-translation. Binds to transfer-messenger RNA (tmRNA), required for stable association of tmRNA with ribosomes. tmRNA and SmpB together mimic tRNA shape, replacing the anticodon stem-loop with SmpB. tmRNA is encoded by the ssrA gene; the 2 termini fold to resemble tRNA(Ala) and it encodes a 'tag peptide', a short internal open reading frame. During trans-translation Ala-aminoacylated tmRNA acts like a tRNA, entering the A-site of stalled ribosomes, displacing the stalled mRNA. The ribosome then switches to translate the ORF on the tmRNA; the nascent peptide is terminated with the 'tag peptide' encoded by the tmRNA and targeted for degradation. The ribosome is freed to recommence translation, which seems to be the essential function of trans-translation. The sequence is that of SsrA-binding protein from Legionella pneumophila (strain Paris).